The primary structure comprises 60 residues: Large ribosomal subunit protein uL30 (60 aa).

The protein belongs to the universal ribosomal protein uL30 family. In terms of assembly, part of the 50S ribosomal subunit.

The protein is Large ribosomal subunit protein uL30 of Bacillus anthracis (strain A0248).